The sequence spans 509 residues: ATP synthase subunit alpha (509 aa).

ATP is bound at residue 169 to 176; sequence GDRQTGKT.

Belongs to the ATPase alpha/beta chains family. F-type ATPases have 2 components, CF(1) - the catalytic core - and CF(0) - the membrane proton channel. CF(1) has five subunits: alpha(3), beta(3), gamma(1), delta(1), epsilon(1). CF(0) has three main subunits: a(1), b(2) and c(9-12). The alpha and beta chains form an alternating ring which encloses part of the gamma chain. CF(1) is attached to CF(0) by a central stalk formed by the gamma and epsilon chains, while a peripheral stalk is formed by the delta and b chains.

The protein resides in the cell inner membrane. The catalysed reaction is ATP + H2O + 4 H(+)(in) = ADP + phosphate + 5 H(+)(out). Its function is as follows. Produces ATP from ADP in the presence of a proton gradient across the membrane. The alpha chain is a regulatory subunit. The sequence is that of ATP synthase subunit alpha from Mesorhizobium japonicum (strain LMG 29417 / CECT 9101 / MAFF 303099) (Mesorhizobium loti (strain MAFF 303099)).